Consider the following 528-residue polypeptide: Cytochrome P450 1A5 (528 aa).

Cys467 provides a ligand contact to heme.

This sequence belongs to the cytochrome P450 family. Heme is required as a cofactor.

The protein localises to the endoplasmic reticulum membrane. Its subcellular location is the microsome membrane. The catalysed reaction is an organic molecule + reduced [NADPH--hemoprotein reductase] + O2 = an alcohol + oxidized [NADPH--hemoprotein reductase] + H2O + H(+). Its function is as follows. Cytochromes P450 are a group of heme-thiolate monooxygenases. In liver microsomes, this enzyme is involved in an NADPH-dependent electron transport pathway. It oxidizes a variety of structurally unrelated compounds, including steroids, fatty acids, and xenobiotics. This is Cytochrome P450 1A5 (CYP1A5) from Gallus gallus (Chicken).